The sequence spans 361 residues: Core-capsid bridging protein (361 aa).

Residues 311 to 321 (RRRRVARRSKS) show a composition bias toward basic residues. Residues 311-331 (RRRRVARRSKSTGRFVAAPRK) are disordered.

This sequence belongs to the adenoviridae core-capsid bridging protein family. In terms of assembly, monomer. Homodimer. Exists in equilibrium between monomers and dimers in solution. Interacts with the histone-like nucleoprotein; this interactions bridge the virus core to the capsid. Interacts with core protein X; this interactions bridge the virus core to the capsid. Interacts with the endosome lysis protein VI; this interactions bridge the virus core to the capsid. Interacts with the peripentonal hexons. Interacts with host NPM1; this interaction might play a role in virus assembly.

The protein localises to the virion. It is found in the host nucleus. The protein resides in the host nucleolus. Its function is as follows. Associates loosely with the viral DNA to form an outer shell around the nucleoprotein-DNA complex and links it with the capsid by binding the endosome lysis protein. Dissociates from the viral genome during entry. Might be involved in nuclear capsid assembly of the viral particles through its association with NPM1/nucleophosmin. The chain is Core-capsid bridging protein from Bovine adenovirus 2 (BAdV-2).